We begin with the raw amino-acid sequence, 156 residues long: Small ribosomal subunit protein bS16 (156 aa).

Over residues Gly85–Glu120 the composition is skewed to basic and acidic residues. Residues Gly85–Glu156 are disordered. Residues Pro132–Glu150 show a composition bias toward acidic residues.

It belongs to the bacterial ribosomal protein bS16 family.

In Micrococcus luteus (strain ATCC 4698 / DSM 20030 / JCM 1464 / CCM 169 / CCUG 5858 / IAM 1056 / NBRC 3333 / NCIMB 9278 / NCTC 2665 / VKM Ac-2230) (Micrococcus lysodeikticus), this protein is Small ribosomal subunit protein bS16.